The chain runs to 192 residues: Xanthine phosphoribosyltransferase (192 aa).

Residues Leu20 and Asn27 each contribute to the xanthine site. 5-phospho-alpha-D-ribose 1-diphosphate is bound at residue 128-132 (ANGQA). Xanthine is bound at residue Lys156.

It belongs to the purine/pyrimidine phosphoribosyltransferase family. Xpt subfamily. In terms of assembly, homodimer.

The protein localises to the cytoplasm. It carries out the reaction XMP + diphosphate = xanthine + 5-phospho-alpha-D-ribose 1-diphosphate. Its pathway is purine metabolism; XMP biosynthesis via salvage pathway; XMP from xanthine: step 1/1. Its function is as follows. Converts the preformed base xanthine, a product of nucleic acid breakdown, to xanthosine 5'-monophosphate (XMP), so it can be reused for RNA or DNA synthesis. This Listeria innocua serovar 6a (strain ATCC BAA-680 / CLIP 11262) protein is Xanthine phosphoribosyltransferase.